Here is a 183-residue protein sequence, read N- to C-terminus: Abscisic acid receptor PYL10 (183 aa).

Positions 20–172 (HELVESQCSS…NLNSLADVTE (153 aa)) are START-like. A disulfide bridge links cysteine 27 with cysteine 153. Abscisate is bound by residues lysine 56, 85–90 (ATKSTE), 112–118 (RLKNYSS), and glutamate 137. The Gate loop motif lies at 81–85 (SGLPA). The Latch loop motif lies at 111 to 113 (HRL).

It belongs to the PYR/PYL/RCAR abscisic acid intracellular receptor family. Monomer. Forms heterodimer with PYL13, thus antagonizing PP2Cs-binding and ABA-independent inhibition of PP2Cs. Homodimer. Binds ABA on one subunit only. Binds to CARs protein in an ABA-independent manner, both at the plasma membrane and in the nucleus. Interacts with ABI1 and HAB1, and possibly with other PP2Cs, in an ABA-independent manner.

The protein localises to the cytoplasm. It localises to the nucleus. Its subcellular location is the cell membrane. Its function is as follows. Receptor for abscisic acid (ABA) required for ABA-mediated responses such as stomatal closure and germination inhibition. Inhibits the activity of group-A protein phosphatases type 2C (PP2Cs) in an ABA-independent manner but more efficiently when activated by ABA. Can be activated by both (-)-ABA and (+)-ABA. The protein is Abscisic acid receptor PYL10 (PYL10) of Arabidopsis thaliana (Mouse-ear cress).